The following is a 542-amino-acid chain: CTP synthase (542 aa).

Positions 1-265 (MARYVFITGG…DDEVLAAFGI (265 aa)) are amidoligase domain. A CTP-binding site is contributed by serine 13. Serine 13 lines the UTP pocket. ATP is bound by residues 14–19 (SLGKGI) and aspartate 71. Aspartate 71 and glutamate 139 together coordinate Mg(2+). CTP-binding positions include 146 to 148 (DIE), 186 to 191 (KTKPTQ), and lysine 222. UTP is bound by residues 186–191 (KTKPTQ) and lysine 222. Positions 291–541 (TIAIVGKYTG…IEAATEQSRL (251 aa)) constitute a Glutamine amidotransferase type-1 domain. An L-glutamine-binding site is contributed by glycine 353. The Nucleophile; for glutamine hydrolysis role is filled by cysteine 380. Residues 381–384 (FGMQ), glutamate 404, and arginine 469 each bind L-glutamine. Residues histidine 514 and glutamate 516 contribute to the active site.

It belongs to the CTP synthase family. As to quaternary structure, homotetramer.

The enzyme catalyses UTP + L-glutamine + ATP + H2O = CTP + L-glutamate + ADP + phosphate + 2 H(+). It carries out the reaction L-glutamine + H2O = L-glutamate + NH4(+). It catalyses the reaction UTP + NH4(+) + ATP = CTP + ADP + phosphate + 2 H(+). It functions in the pathway pyrimidine metabolism; CTP biosynthesis via de novo pathway; CTP from UDP: step 2/2. With respect to regulation, allosterically activated by GTP, when glutamine is the substrate; GTP has no effect on the reaction when ammonia is the substrate. The allosteric effector GTP functions by stabilizing the protein conformation that binds the tetrahedral intermediate(s) formed during glutamine hydrolysis. Inhibited by the product CTP, via allosteric rather than competitive inhibition. Catalyzes the ATP-dependent amination of UTP to CTP with either L-glutamine or ammonia as the source of nitrogen. Regulates intracellular CTP levels through interactions with the four ribonucleotide triphosphates. This is CTP synthase from Rhizobium etli (strain ATCC 51251 / DSM 11541 / JCM 21823 / NBRC 15573 / CFN 42).